A 619-amino-acid polypeptide reads, in one-letter code: CLPTM1-like membrane protein cnrB (619 aa).

The tract at residues 1-21 (MNNQGGAVAANGQRPQAQQQQ) is disordered. Residues 9-21 (AANGQRPQAQQQQ) show a composition bias toward low complexity. A run of 6 helical transmembrane segments spans residues 26–46 (IMGI…ASFA), 324–344 (WILG…FLAF), 360–380 (LSVK…LYLL), 384–404 (TSYM…WKLG), 445–465 (YLSW…LYYH), and 474–496 (VVSS…QLFI). The disordered stretch occupies residues 566–619 (SEEAEEVQQQDKKEIKEKVEEREEEKQEEEEEEKEKEEESTSSSKVTKRKTKKV). The segment covering 574–590 (QQDKKEIKEKVEEREEE) has biased composition (basic and acidic residues). The span at 591-605 (KQEEEEEEKEKEEES) shows a compositional bias: acidic residues.

The protein belongs to the CLPTM1 family.

The protein resides in the membrane. The polypeptide is CLPTM1-like membrane protein cnrB (cnrB) (Dictyostelium discoideum (Social amoeba)).